Here is a 72-residue protein sequence, read N- to C-terminus: Large ribosomal subunit protein uL29 (72 aa).

The protein belongs to the universal ribosomal protein uL29 family.

This is Large ribosomal subunit protein uL29 from Prochlorococcus marinus (strain MIT 9215).